The primary structure comprises 171 residues: Viral CASP8 and FADD-like apoptosis regulator (171 aa).

DED domains are found at residues methionine 1–glycine 74 and proline 92–valine 171.

In terms of assembly, associates with the death-inducing signaling complex (DISC) formed by TNFRSF6, FADD and caspase-8. Interacts with FADD.

Functionally, inhibits TNFRSF1A, TNFRSF6, TNFRSF10 and TNFRSF12 induced apoptosis. May interfere with caspase-8 recruitment and activation at the death-inducing signaling complex (DISC). May lead to higher virus production and contribute to virus persistence and oncogenicity. The protein is Viral CASP8 and FADD-like apoptosis regulator of Equus caballus (Horse).